A 372-amino-acid chain; its full sequence is Ciliary neurotrophic factor receptor subunit alpha (372 aa).

The first 22 residues, 1 to 22 (MAASVPWACCAVLAAAAAAVYT), serve as a signal peptide directing secretion. Positions 27–104 (PQEAPHVQYE…WHLRHQVLLH (78 aa)) constitute an Ig-like C2-type domain. A disulfide bond links cysteine 46 and cysteine 89. N-linked (GlcNAc...) asparagine glycosylation is found at asparagine 60, asparagine 70, asparagine 142, asparagine 190, and asparagine 261. Fibronectin type-III domains are found at residues 108–205 (PPRE…VKPD) and 206–306 (PPEN…TEEP). Positions 290–294 (WSDWS) match the WSXWS motif motif. A disordered region spans residues 301 to 339 (PWTEEPRHLTTEAQAPETTTSTTSSLAPPPTTKICDPGE). Over residues 311–326 (TEAQAPETTTSTTSSL) the composition is skewed to low complexity. Serine 342 is lipidated: GPI-anchor amidated serine. Residues 343-372 (GGGPSIPFLTSVPVTLVLAAAAATANNLLI) constitute a propeptide, removed in mature form.

It belongs to the type I cytokine receptor family. Type 3 subfamily. In terms of assembly, forms a heterotrimer with LIFR and IL6ST. Interacts with heterodimeric neurotropic cytokine composed of CLCF1/CLC and CRLF1/CLF-1. Either alone or in complex with the heterodimer CLCF1-CRLF1 interacts with SORL1; this interaction may promote internalization and lysosomal degradation. As to expression, nervous system.

Its subcellular location is the cell membrane. Binds to CNTF. The alpha subunit provides the receptor specificity. This is Ciliary neurotrophic factor receptor subunit alpha (Cntfr) from Rattus norvegicus (Rat).